Reading from the N-terminus, the 420-residue chain is Transcription termination factor Rho (420 aa).

A Rho RNA-BD domain is found at 49–124; the sequence is DIFGGGVLEI…LKVDQVNDDK (76 aa). Residues 170–175, 182–187, and R213 each bind ATP; these read GKGQRG and KAGKTM.

Belongs to the Rho family. In terms of assembly, homohexamer. The homohexamer assembles into an open ring structure.

Its function is as follows. Facilitates transcription termination by a mechanism that involves Rho binding to the nascent RNA, activation of Rho's RNA-dependent ATPase activity, and release of the mRNA from the DNA template. The protein is Transcription termination factor Rho of Haemophilus influenzae (strain ATCC 51907 / DSM 11121 / KW20 / Rd).